The chain runs to 70 residues: Large ribosomal subunit protein uL29 (70 aa).

The protein belongs to the universal ribosomal protein uL29 family.

This chain is Large ribosomal subunit protein uL29 (rpl29), found in Methanocaldococcus jannaschii (strain ATCC 43067 / DSM 2661 / JAL-1 / JCM 10045 / NBRC 100440) (Methanococcus jannaschii).